We begin with the raw amino-acid sequence, 768 residues long: DNA ligase (768 aa).

Over residues 1–11 (MSPSAPANSAP) the composition is skewed to low complexity. The disordered stretch occupies residues 1–28 (MSPSAPANSAPDPDRNGVPDVGPASAAP). NAD(+) is bound by residues 62 to 66 (DAEYD), 111 to 112 (SI), and glutamate 148. Lysine 150 (N6-AMP-lysine intermediate) is an active-site residue. Residues arginine 171, glutamate 238, lysine 361, and lysine 385 each coordinate NAD(+). Zn(2+) is bound by residues cysteine 484, cysteine 487, cysteine 502, and cysteine 508. A BRCT domain is found at 670–759 (AAELPLAGKT…EADADADAEG (90 aa)).

The protein belongs to the NAD-dependent DNA ligase family. LigA subfamily. Requires Mg(2+) as cofactor. Mn(2+) serves as cofactor.

It carries out the reaction NAD(+) + (deoxyribonucleotide)n-3'-hydroxyl + 5'-phospho-(deoxyribonucleotide)m = (deoxyribonucleotide)n+m + AMP + beta-nicotinamide D-nucleotide.. DNA ligase that catalyzes the formation of phosphodiester linkages between 5'-phosphoryl and 3'-hydroxyl groups in double-stranded DNA using NAD as a coenzyme and as the energy source for the reaction. It is essential for DNA replication and repair of damaged DNA. The protein is DNA ligase of Leptothrix cholodnii (strain ATCC 51168 / LMG 8142 / SP-6) (Leptothrix discophora (strain SP-6)).